The primary structure comprises 37 residues: Large ribosomal subunit protein bL36 (37 aa).

This sequence belongs to the bacterial ribosomal protein bL36 family.

The chain is Large ribosomal subunit protein bL36 from Koribacter versatilis (strain Ellin345).